The sequence spans 336 residues: Atypical chemokine receptor 1 (336 aa).

The mediates Plasmodium vivax Duffy receptor (PVDR) binding stretch occupies residues 1 to 30; sequence MGNCLHRAELSPSTENSSQLDFEDVWNSSY. The Extracellular portion of the chain corresponds to 1–63; the sequence is MGNCLHRAEL…CNLLDDSALP (63 aa). Asparagine 16 carries N-linked (GlcNAc...) asparagine glycosylation. Tyrosine 30 carries the post-translational modification Sulfotyrosine. N-linked (GlcNAc...) asparagine glycosylation is present at asparagine 33. Tyrosine 41 carries the sulfotyrosine modification. 2 cysteine pairs are disulfide-bonded: cysteine 51-cysteine 276 and cysteine 129-cysteine 195. A helical membrane pass occupies residues 64–84; it reads FFILTSVLGILASSTVLFMLF. At 85-95 the chain is on the cytoplasmic side; sequence RPLFRWQLCPG. A helical membrane pass occupies residues 96–116; that stretch reads WPVLAQLAVGSALFSIVVPVL. Residues 117–129 lie on the Extracellular side of the membrane; that stretch reads APGLGSTRSSALC. Residues 130-153 form a helical membrane-spanning segment; it reads SLGYCVWYGSAFAQALLLGCHASL. Residues 154-166 are Cytoplasmic-facing; that stretch reads GHRLGAGQVPGLT. The helical transmembrane segment at 167–187 threads the bilayer; sequence LGLTVGIWGVAALLTLPVTLA. Over 188 to 207 the chain is Extracellular; it reads SGASGGLCTLIYSTELKALQ. The chain crosses the membrane as a helical span at residues 208-228; it reads ATHTVACLAIFVLLPLGLFGA. The Cytoplasmic segment spans residues 229 to 244; that stretch reads KGLKKALGMGPGPWMN. The helical transmembrane segment at 245–265 threads the bilayer; that stretch reads ILWAWFIFWWPHGVVLGLDFL. The Extracellular portion of the chain corresponds to 266–287; the sequence is VRSKLLLLSTCLAQQALDLLLN. A helical membrane pass occupies residues 288 to 308; it reads LAEALAILHCVATPLLLALFC. The Cytoplasmic segment spans residues 309-336; the sequence is HQATRTLLPSLPLPEGWSSHLDTLGSKS.

This sequence belongs to the G-protein coupled receptor 1 family. Atypical chemokine receptor subfamily. As to quaternary structure, (Microbial infection) Interacts (via N-terminal extracellular domain) with Plasmodium vivax Duffy receptor (PVDR) (via PvRII region). In terms of assembly, (Microbial infection) Interacts (via N-terminal extracellular domain) with Plasmodium knowlesi Duffy receptor alpha form (DBPalpha) (via region II). Sulfation at Tyr-41 facilitates interaction with MGSA/CXCL1, RANTES/CCL5 and MCP-1/CCL2 but not IL8/CXCL8. Sulfation at Tyr-30 facilitates interaction with IL8/CXCL8. In terms of processing, (Microbial infection) Sulfation at Tyr-41 facilitates interaction with Plasmodium vivax Duffy receptor (PVDR). Sulfation at Tyr-30/Tyr-41 and Tyr-41 alone increases binding affinity of Plasmodium vivax parasites and likely promotes invasion of red blood cells. Post-translationally, (Microbial infection) Sulfation at Tyr-41 facilitates interaction with Plasmodium knowlesi Duffy receptor alpha form (DBPalpha). Sulfation at Tyr-30/Tyr-41 and Tyr-41 alone increases binding affinity of Plasmodium knowlesi parasites and likely promotes invasion of red blood cells. Found in adult kidney, adult spleen, bone marrow and fetal liver. In particular, it is expressed along postcapillary venules throughout the body, except in the adult liver. Erythroid cells and postcapillary venule endothelium are the principle tissues expressing duffy. Fy(-A-B) individuals do not express duffy in the bone marrow, however they do, in postcapillary venule endothelium.

It localises to the early endosome. Its subcellular location is the recycling endosome. The protein localises to the membrane. Functionally, atypical chemokine receptor that controls chemokine levels and localization via high-affinity chemokine binding that is uncoupled from classic ligand-driven signal transduction cascades, resulting instead in chemokine sequestration, degradation, or transcytosis. Also known as interceptor (internalizing receptor) or chemokine-scavenging receptor or chemokine decoy receptor. Has a promiscuous chemokine-binding profile, interacting with inflammatory chemokines of both the CXC and the CC subfamilies but not with homeostatic chemokines. Acts as a receptor for chemokines including CCL2, CCL5, CCL7, CCL11, CCL13, CCL14, CCL17, CXCL5, CXCL6, IL8/CXCL8, CXCL11, GRO, RANTES, MCP-1 and TARC. May regulate chemokine bioavailability and, consequently, leukocyte recruitment through two distinct mechanisms: when expressed in endothelial cells, it sustains the abluminal to luminal transcytosis of tissue-derived chemokines and their subsequent presentation to circulating leukocytes; when expressed in erythrocytes, serves as blood reservoir of cognate chemokines but also as a chemokine sink, buffering potential surges in plasma chemokine levels. Its function is as follows. (Microbial infection) Acts as a receptor for the malaria parasite Plasmodium vivax. (Microbial infection) Acts as a receptor for the malaria parasite Plasmodium knowlesi. The polypeptide is Atypical chemokine receptor 1 (ACKR1) (Homo sapiens (Human)).